A 246-amino-acid polypeptide reads, in one-letter code: UDP-N-acetyl-D-mannosaminuronic acid transferase (246 aa).

The protein belongs to the glycosyltransferase 26 family.

The enzyme catalyses UDP-N-acetyl-alpha-D-mannosaminouronate + N-acetyl-alpha-D-glucosaminyl-di-trans,octa-cis-undecaprenyl diphosphate = beta-D-ManNAcA-(1-&gt;4)-alpha-D-GlcNAc-di-trans,octa-cis-undecaprenyl diphosphate + UDP + H(+). It participates in bacterial outer membrane biogenesis; enterobacterial common antigen biosynthesis. Functionally, catalyzes the synthesis of Und-PP-GlcNAc-ManNAcA (Lipid II), the second lipid-linked intermediate involved in enterobacterial common antigen (ECA) synthesis. The protein is UDP-N-acetyl-D-mannosaminuronic acid transferase of Escherichia coli O127:H6 (strain E2348/69 / EPEC).